We begin with the raw amino-acid sequence, 185 residues long: PXMP2/4 family protein 4 (185 aa).

3 helical membrane passes run 63 to 83 (MAVF…KYLD), 100 to 120 (IDQV…MGIL), and 141 to 161 (VSDC…ISSI).

It belongs to the peroxisomal membrane protein PXMP2/4 family.

The protein resides in the membrane. This chain is PXMP2/4 family protein 4, found in Dictyostelium discoideum (Social amoeba).